The following is a 352-amino-acid chain: Selenide, water dikinase (352 aa).

Cys-23 is a catalytic residue. Residues Lys-26 and 54–56 (SRD) each bind ATP. Residue Asp-57 participates in Mg(2+) binding. ATP-binding positions include Asp-74, Asp-97, and 145 to 147 (GHS). Asp-97 serves as a coordination point for Mg(2+). A Mg(2+)-binding site is contributed by Asp-233.

This sequence belongs to the selenophosphate synthase 1 family. Class I subfamily. In terms of assembly, homodimer. Mg(2+) serves as cofactor.

It catalyses the reaction hydrogenselenide + ATP + H2O = selenophosphate + AMP + phosphate + 2 H(+). Synthesizes selenophosphate from selenide and ATP. The chain is Selenide, water dikinase from Shewanella baltica (strain OS155 / ATCC BAA-1091).